We begin with the raw amino-acid sequence, 504 residues long: Cytochrome P450 3A11 (504 aa).

Cys443 is a heme binding site.

Belongs to the cytochrome P450 family. It depends on heme as a cofactor. In terms of tissue distribution, highly expressed in liver.

The protein localises to the endoplasmic reticulum membrane. The protein resides in the microsome membrane. The enzyme catalyses an organic molecule + reduced [NADPH--hemoprotein reductase] + O2 = an alcohol + oxidized [NADPH--hemoprotein reductase] + H2O + H(+). In terms of biological role, catalyzes erythromycin N-demethylation, nifedipine oxidation and testosterone 6 beta-hydroxylation. The polypeptide is Cytochrome P450 3A11 (Cyp3a11) (Mus musculus (Mouse)).